The following is a 103-amino-acid chain: Small ribosomal subunit protein uS10 (103 aa).

This sequence belongs to the universal ribosomal protein uS10 family. In terms of assembly, part of the 30S ribosomal subunit.

In terms of biological role, involved in the binding of tRNA to the ribosomes. This is Small ribosomal subunit protein uS10 from Acidovorax sp. (strain JS42).